The primary structure comprises 195 residues: Glycerol-3-phosphate acyltransferase (195 aa).

The next 5 helical transmembrane spans lie at 7-27 (IFILCYLIGSIPFGFILSYVI), 52-72 (LALLTLLLDALKSFICVAIAQ), 80-100 (ILFLAALFAIIGHMFPVYLFF), 113-133 (LIFIDYRVAVCFLTFWIICFL), and 147-167 (LIALLFICTCYTIVQSVIFTI).

The protein belongs to the PlsY family. Probably interacts with PlsX.

Its subcellular location is the cell inner membrane. The enzyme catalyses an acyl phosphate + sn-glycerol 3-phosphate = a 1-acyl-sn-glycero-3-phosphate + phosphate. It participates in lipid metabolism; phospholipid metabolism. Its function is as follows. Catalyzes the transfer of an acyl group from acyl-phosphate (acyl-PO(4)) to glycerol-3-phosphate (G3P) to form lysophosphatidic acid (LPA). This enzyme utilizes acyl-phosphate as fatty acyl donor, but not acyl-CoA or acyl-ACP. In Ehrlichia ruminantium (strain Welgevonden), this protein is Glycerol-3-phosphate acyltransferase.